A 116-amino-acid chain; its full sequence is NADH-ubiquinone oxidoreductase chain 3 (116 aa).

Helical transmembrane passes span 3-23 (LFATILIIMTTLSLVLALVSF), 56-76 (FFLVAVLFPLFDLEIALLLPL), and 88-108 (TLFWAMTVLILLTLGLAYEWA).

It belongs to the complex I subunit 3 family. Core subunit of respiratory chain NADH dehydrogenase (Complex I) which is composed of 45 different subunits.

It is found in the mitochondrion inner membrane. It catalyses the reaction a ubiquinone + NADH + 5 H(+)(in) = a ubiquinol + NAD(+) + 4 H(+)(out). In terms of biological role, core subunit of the mitochondrial membrane respiratory chain NADH dehydrogenase (Complex I) which catalyzes electron transfer from NADH through the respiratory chain, using ubiquinone as an electron acceptor. Essential for the catalytic activity of complex I. This is NADH-ubiquinone oxidoreductase chain 3 (mt-nd3) from Danio rerio (Zebrafish).